Reading from the N-terminus, the 545-residue chain is MPMDIETKQSGDLIFRSKLPDIYIPKHLPLHSYCFENLSEFNSRPCLIDGANDRIYTYAEVELTSRKVAVGLNKLGIQQKDTIMILLPNCPEFVFAFIGASYLGAISTMANPLFTPAEVVKQAKASSAKIVITQACFAGKVKDYAIENDLKVICVDSAPEGCVHFSELIQSDEHEIPDVKIQPDDVVALPYSSGTTGLPKGVMLTHKGLVTSVAQQVDGENANLYMHSDDVLMCVLPLFHIYSLNSVLLCALRVGAAILIMQKFDIAQFLELIPKHKVTIGPFVPPIVLAIAKSPLVHNYDLSSVRTVMSGAAPLGKELEDAVRAKFPNAKLGQGYGMTEAGPVLAMCLAFAKEPFDIKSGACGTVVRNAEMKIVDPDTGCSLPRNQPGEICIRGDQIMKGYLNDPEATARTIEKEGWLHTGDIGFIDDDDELFIVDRLKELIKYKGFQVAPAELEALLINHPDISDAAVVPMIDEQAGEVPVAFVVRSNGSTITEDEVKDFISKQVIFYKRIKRVFFVETVPKSPSGKILRKDLRARLAAGISN.

6 residues coordinate ATP: Ser-192, Ser-193, Gly-194, Thr-195, Thr-196, and Lys-200. (E)-4-coumaroyl-AMP is bound by residues Tyr-242 and Ser-246. Residue Lys-263 participates in CoA binding. The SBD1 stretch occupies residues 265 to 334 (DIAQFLELIP…AKFPNAKLGQ (70 aa)). Residues Ala-312, Gln-334, Gly-335, Thr-339, and Met-347 each contribute to the (E)-4-coumaroyl-AMP site. Residues Gln-334, Gly-335, and Thr-339 each contribute to the ATP site. The SBD2 stretch occupies residues 335–402 (GYGMTEAGPV…IRGDQIMKGY (68 aa)). ATP is bound by residues Asp-423 and Arg-438. The (E)-4-coumaroyl-AMP site is built by Lys-440 and Lys-444. CoA is bound by residues Lys-446 and Gly-447. Lys-529 serves as a coordination point for ATP.

The protein belongs to the ATP-dependent AMP-binding enzyme family. It depends on Mg(2+) as a cofactor.

The enzyme catalyses (E)-4-coumarate + ATP + CoA = (E)-4-coumaroyl-CoA + AMP + diphosphate. It catalyses the reaction (E)-4-coumarate + ATP + H(+) = (E)-4-coumaroyl-AMP + diphosphate. The catalysed reaction is (E)-4-coumaroyl-AMP + CoA = (E)-4-coumaroyl-CoA + AMP + H(+). It participates in phytoalexin biosynthesis; 3,4',5-trihydroxystilbene biosynthesis; 3,4',5-trihydroxystilbene from trans-4-coumarate: step 1/2. In terms of biological role, carboxylate--CoA ligase that may use 4-coumarate as substrate. Follows a two-step reaction mechanism, wherein the carboxylate substrate first undergoes adenylation by ATP, followed by a thioesterification in the presence of CoA to yield the final CoA thioester. The sequence is that of 4-coumarate--CoA ligase 2 (4CL2) from Solanum tuberosum (Potato).